A 197-amino-acid polypeptide reads, in one-letter code: HTH-type transcriptional regulator BetI (197 aa).

Positions 8-68 constitute an HTH tetR-type domain; it reads PIRRQQLIQA…ATMRHLMNAL (61 aa). Positions 31-50 form a DNA-binding region, H-T-H motif; that stretch reads SIALIARLAGVSNGIISHYF.

The protein operates within amine and polyamine biosynthesis; betaine biosynthesis via choline pathway [regulation]. In terms of biological role, repressor involved in the biosynthesis of the osmoprotectant glycine betaine. It represses transcription of the choline transporter BetT and the genes of BetAB involved in the synthesis of glycine betaine. This chain is HTH-type transcriptional regulator BetI, found in Pseudomonas syringae pv. tomato (strain ATCC BAA-871 / DC3000).